The primary structure comprises 1188 residues: DNA-directed RNA polymerase II subunit 2 (1188 aa).

Asp800 lines the Mg(2+) pocket. Disordered stretches follow at residues 852-871 (SYDK…VSGE) and 877-897 (KTTP…TRRD). Residues 879 to 892 (TPISQDEAQGQSSR) show a composition bias toward polar residues. Zn(2+) is bound by residues Cys1124, Cys1127, Cys1142, and Cys1145. Residues 1124–1145 (CEVCGLIAIANLKKNSFECRGC) form a C4-type zinc finger.

Belongs to the RNA polymerase beta chain family. As to quaternary structure, component of the RNA polymerase II complex consisting of at least 12 subunits.

It localises to the nucleus. It carries out the reaction RNA(n) + a ribonucleoside 5'-triphosphate = RNA(n+1) + diphosphate. Functionally, DNA-dependent RNA polymerase catalyzes the transcription of DNA into RNA using the four ribonucleoside triphosphates as substrates. Second largest component of RNA polymerase II which synthesizes mRNA precursors and many functional non-coding RNAs. Proposed to contribute to the polymerase catalytic activity and forms the polymerase active center together with the largest subunit. Pol II is the central component of the basal RNA polymerase II transcription machinery. It is composed of mobile elements that move relative to each other. NRPB2 is part of the core element with the central large cleft, the clamp element that moves to open and close the cleft and the jaws that are thought to grab the incoming DNA template. Essential for the completion of the three rounds of mitosis in female megaspores required for the development of mature gametophytes. In Arabidopsis thaliana (Mouse-ear cress), this protein is DNA-directed RNA polymerase II subunit 2 (NRPB2).